We begin with the raw amino-acid sequence, 36 residues long: uncharacterized protein (36 aa).

This is an uncharacterized protein from Spiroplasma melliferum (SpV1).